We begin with the raw amino-acid sequence, 356 residues long: Glutamine synthetase (356 aa).

Positions 26–105 (IMAEYVWVDA…VLAECWNAGG (80 aa)) constitute a GS beta-grasp domain. One can recognise a GS catalytic domain in the interval 112-356 (FRHDCVKVMD…TKALLQFSLA (245 aa)).

The protein belongs to the glutamine synthetase family. As to quaternary structure, homooctamer.

It localises to the cytoplasm. It carries out the reaction L-glutamate + NH4(+) + ATP = L-glutamine + ADP + phosphate + H(+). This is Glutamine synthetase (GLN1) from Fusarium solani subsp. phaseoli (Nectria haematococca).